The following is a 337-amino-acid chain: tRNA N6-adenosine threonylcarbamoyltransferase (337 aa).

The Fe cation site is built by histidine 111 and histidine 115. Substrate contacts are provided by residues 134–138 (LVSGG), aspartate 167, glycine 180, and asparagine 272. Residue aspartate 300 coordinates Fe cation.

Belongs to the KAE1 / TsaD family. Fe(2+) serves as cofactor.

Its subcellular location is the cytoplasm. It carries out the reaction L-threonylcarbamoyladenylate + adenosine(37) in tRNA = N(6)-L-threonylcarbamoyladenosine(37) in tRNA + AMP + H(+). Required for the formation of a threonylcarbamoyl group on adenosine at position 37 (t(6)A37) in tRNAs that read codons beginning with adenine. Is involved in the transfer of the threonylcarbamoyl moiety of threonylcarbamoyl-AMP (TC-AMP) to the N6 group of A37, together with TsaE and TsaB. TsaD likely plays a direct catalytic role in this reaction. This chain is tRNA N6-adenosine threonylcarbamoyltransferase, found in Aeromonas hydrophila subsp. hydrophila (strain ATCC 7966 / DSM 30187 / BCRC 13018 / CCUG 14551 / JCM 1027 / KCTC 2358 / NCIMB 9240 / NCTC 8049).